The sequence spans 451 residues: Transcription factor TGAL8 (451 aa).

Over residues 1 to 22 the composition is skewed to polar residues; sequence MAYPSTSGMIQASSSLHGSITR. Disordered stretches follow at residues 1–32 and 70–151; these read MAYP…DMPS and FPSQ…PKTL. The segment covering 141–150 has biased composition (basic and acidic residues); the sequence is KGPKTPDPKT. The region spanning 147–191 is the bZIP domain; the sequence is DPKTLRRLAQNREAARKSRLRKKAYIQQLETGRIRLAHLEQEIQF. Residues 149–169 are basic motif; it reads KTLRRLAQNREAARKSRLRKK. The segment at 175–189 is leucine-zipper; sequence LETGRIRLAHLEQEI. The DOG1 domain maps to 208–444; sequence AALFNLEYER…RALALFWTTT (237 aa).

This sequence belongs to the bZIP family. As to quaternary structure, interacts with NPR5/NH4, NH5.1 and NH5.2.

Its subcellular location is the nucleus. Transcriptional regulator involved in defense response. This Oryza sativa subsp. japonica (Rice) protein is Transcription factor TGAL8.